An 855-amino-acid chain; its full sequence is MIRAKHISNLSSSARSFFLSGSRPSAADGNSCTCAEDESGVSKRQQIRTEVVQTGKRASNLAAGLAGSILPVEAGKPLVVPKTVEHFTRPSLLPQHVSSPALPGKADSVNHASAIIKEDVGVPIGDQIFKAGIGNVNLLSDIANYKIPLSDGTEVVGLPKSCMVDPTRPISGVKSSNVKVIRREHLAKVYPRSADRVPINSSPGTKQASNDVAGKSFEAHDLLSNNVSGKRKIMPQRPYTDSTRYASGGCDYSVHSSDDRTIISSVEGFGKPSREMMKVTPRTAPTPRQHCNPGYVVENVSSILRRFKWGHAAEEALHNFGFRMDAYQANQVLKQMDNYANALGFFYWLKRQPGFKHDGHTYTTMVGNLGRAKQFGEINKLLDEMVRDGCKPNTVTYNRLIHSYGRANYLKEAMNVFNQMQEAGCEPDRVTYCTLIDIHAKAGFLDIAMDMYQRMQEAGLSPDTFTYSVIINCLGKAGHLPAAHRLFCEMVGQGCTPNLVTFNIMIALHAKARNYETALKLYRDMQNAGFQPDKVTYSIVMEVLGHCGFLEEAEGVFAEMQRKNWVPDEPVYGLLVDLWGKAGNVDKAWQWYQAMLQAGLRPNVPTCNSLLSTFLRVHRMSEAYNLLQSMLALGLHPSLQTYTLLLSCCTDARSNFDMGFCGQLMAVSGHPAHMFLLKMPPAGPDGQKVRDHVSNFLDFMHSEDRESKRGLMDAVVDFLHKSGLKEEAGSVWEVAAGKNVYPDALREKSYSYWLINLHVMSEGTAVIALSRTLAWFRKQMLVSGDCPSRIDIVTGWGRRSRVTGTSMVRQAVEELLNIFNFPFFTENGNSGCFVGSGEPLKNWLLESYVERMHLL.

Residues 21 to 40 form a disordered region; the sequence is GSRPSAADGNSCTCAEDESG. PPR repeat units lie at residues 358 to 392, 393 to 427, 428 to 462, 463 to 497, 498 to 532, 533 to 567, 568 to 602, and 603 to 637; these read DGHT…GCKP, NTVT…GCEP, DRVT…GLSP, DTFT…GCTP, NLVT…GFQP, DKVT…NWVP, DEPV…GLRP, and NVPT…GLHP. Positions 755–838 constitute a Smr domain; that stretch reads INLHVMSEGT…NSGCFVGSGE (84 aa).

It belongs to the PPR family. P subfamily.

This chain is Pentatricopeptide repeat-containing protein At1g74750, found in Arabidopsis thaliana (Mouse-ear cress).